A 295-amino-acid polypeptide reads, in one-letter code: Elongation factor Ts (295 aa).

The segment at 80–83 is involved in Mg(2+) ion dislocation from EF-Tu; that stretch reads TDFV.

Belongs to the EF-Ts family.

The protein resides in the cytoplasm. Its function is as follows. Associates with the EF-Tu.GDP complex and induces the exchange of GDP to GTP. It remains bound to the aminoacyl-tRNA.EF-Tu.GTP complex up to the GTP hydrolysis stage on the ribosome. This is Elongation factor Ts from Lysinibacillus sphaericus (strain C3-41).